A 240-amino-acid polypeptide reads, in one-letter code: Biosynthetic peptidoglycan transglycosylase (240 aa).

Residues 27-47 form a helical membrane-spanning segment; sequence VVLLFFFAVFALLLIFRFVPI.

This sequence belongs to the glycosyltransferase 51 family.

Its subcellular location is the cell inner membrane. It carries out the reaction [GlcNAc-(1-&gt;4)-Mur2Ac(oyl-L-Ala-gamma-D-Glu-L-Lys-D-Ala-D-Ala)](n)-di-trans,octa-cis-undecaprenyl diphosphate + beta-D-GlcNAc-(1-&gt;4)-Mur2Ac(oyl-L-Ala-gamma-D-Glu-L-Lys-D-Ala-D-Ala)-di-trans,octa-cis-undecaprenyl diphosphate = [GlcNAc-(1-&gt;4)-Mur2Ac(oyl-L-Ala-gamma-D-Glu-L-Lys-D-Ala-D-Ala)](n+1)-di-trans,octa-cis-undecaprenyl diphosphate + di-trans,octa-cis-undecaprenyl diphosphate + H(+). Its pathway is cell wall biogenesis; peptidoglycan biosynthesis. In terms of biological role, peptidoglycan polymerase that catalyzes glycan chain elongation from lipid-linked precursors. The protein is Biosynthetic peptidoglycan transglycosylase of Haemophilus influenzae (strain PittEE).